A 213-amino-acid polypeptide reads, in one-letter code: Adenylate kinase (213 aa).

Residue 14-19 (GSGKGT) participates in ATP binding. Positions 34-63 (SSGNLLRSAIKASTPLGIKASEYIDEGQLV) are NMP. Residues Ser-35, Arg-40, 61–63 (QLV), 89–92 (GFPR), and Gln-96 contribute to the AMP site. Residues 129–162 (SRFICPSCNFVYNQSQGFRECPTCHSELVRRSDD) form an LID region. Arg-130 contacts ATP. Positions 133 and 136 each coordinate Zn(2+). 139–140 (VY) provides a ligand contact to ATP. Residues Cys-149 and Cys-152 each coordinate Zn(2+). AMP-binding residues include Arg-159 and Arg-170. Lys-198 lines the ATP pocket.

Belongs to the adenylate kinase family. As to quaternary structure, monomer.

It is found in the cytoplasm. The catalysed reaction is AMP + ATP = 2 ADP. The protein operates within purine metabolism; AMP biosynthesis via salvage pathway; AMP from ADP: step 1/1. Functionally, catalyzes the reversible transfer of the terminal phosphate group between ATP and AMP. Plays an important role in cellular energy homeostasis and in adenine nucleotide metabolism. The polypeptide is Adenylate kinase (Chlamydia felis (strain Fe/C-56) (Chlamydophila felis)).